The chain runs to 400 residues: Lipid-A-disaccharide synthase (400 aa).

It belongs to the LpxB family.

The catalysed reaction is a lipid X + a UDP-2-N,3-O-bis[(3R)-3-hydroxyacyl]-alpha-D-glucosamine = a lipid A disaccharide + UDP + H(+). It functions in the pathway bacterial outer membrane biogenesis; LPS lipid A biosynthesis. Its function is as follows. Condensation of UDP-2,3-diacylglucosamine and 2,3-diacylglucosamine-1-phosphate to form lipid A disaccharide, a precursor of lipid A, a phosphorylated glycolipid that anchors the lipopolysaccharide to the outer membrane of the cell. This Acidobacterium capsulatum (strain ATCC 51196 / DSM 11244 / BCRC 80197 / JCM 7670 / NBRC 15755 / NCIMB 13165 / 161) protein is Lipid-A-disaccharide synthase.